Reading from the N-terminus, the 147-residue chain is Myoglobin (147 aa).

Positions 2-141 (ADFDMVLKCW…IIADMEADYK (140 aa)) constitute a Globin domain. Residue H60 coordinates nitrite. Residue H60 coordinates O2. H89 contributes to the heme b binding site.

This sequence belongs to the globin family. As to quaternary structure, monomeric.

It is found in the cytoplasm. The protein resides in the sarcoplasm. The enzyme catalyses Fe(III)-heme b-[protein] + nitric oxide + H2O = Fe(II)-heme b-[protein] + nitrite + 2 H(+). It carries out the reaction H2O2 + AH2 = A + 2 H2O. Its function is as follows. Monomeric heme protein which primary function is to store oxygen and facilitate its diffusion within muscle tissues. Reversibly binds oxygen through a pentacoordinated heme iron and enables its timely and efficient release as needed during periods of heightened demand. Depending on the oxidative conditions of tissues and cells, and in addition to its ability to bind oxygen, it also has a nitrite reductase activity whereby it regulates the production of bioactive nitric oxide. Under stress conditions, like hypoxia and anoxia, it also protects cells against reactive oxygen species thanks to its pseudoperoxidase activity. The sequence is that of Myoglobin (mb) from Gobionotothen gibberifrons (Humped rockcod).